Reading from the N-terminus, the 314-residue chain is DNA-directed RNA polymerase subunit alpha (314 aa).

Residues 1–229 (MLESKLKAPV…EHLNYFANPE (229 aa)) form an alpha N-terminal domain (alpha-NTD) region. The alpha C-terminal domain (alpha-CTD) stretch occupies residues 246–314 (SAEEDLDLPL…LAKKGFTLKE (69 aa)).

Belongs to the RNA polymerase alpha chain family. Homodimer. The RNAP catalytic core consists of 2 alpha, 1 beta, 1 beta' and 1 omega subunit. When a sigma factor is associated with the core the holoenzyme is formed, which can initiate transcription.

The catalysed reaction is RNA(n) + a ribonucleoside 5'-triphosphate = RNA(n+1) + diphosphate. DNA-dependent RNA polymerase catalyzes the transcription of DNA into RNA using the four ribonucleoside triphosphates as substrates. This Thermus aquaticus protein is DNA-directed RNA polymerase subunit alpha (rpoA).